A 197-amino-acid chain; its full sequence is Imidazoleglycerol-phosphate dehydratase (197 aa).

The protein belongs to the imidazoleglycerol-phosphate dehydratase family.

The protein localises to the cytoplasm. The catalysed reaction is D-erythro-1-(imidazol-4-yl)glycerol 3-phosphate = 3-(imidazol-4-yl)-2-oxopropyl phosphate + H2O. It participates in amino-acid biosynthesis; L-histidine biosynthesis; L-histidine from 5-phospho-alpha-D-ribose 1-diphosphate: step 6/9. This is Imidazoleglycerol-phosphate dehydratase from Pseudomonas fluorescens (strain ATCC BAA-477 / NRRL B-23932 / Pf-5).